Reading from the N-terminus, the 346-residue chain is E3 ubiquitin-protein ligase RNF146-A (346 aa).

The RING-type zinc finger occupies 37-75 (CAICLQTCVHPVSLPCKHVFCYLCVKGASWLGKRCALCR). The region spanning 91–167 (PELKAASRGN…EHGRRRKIKR (77 aa)) is the WWE domain. Disordered regions lie at residues 195-240 (SSAD…GTSL) and 256-301 (ERSH…ALVA). Residues 202 to 216 (SVPAQSGASVQSSSV) show a composition bias toward low complexity. A compositionally biased stretch (acidic residues) spans 281–295 (SIEETESDASSDSED).

As to quaternary structure, interacts with poly-ADP-ribosylated AXIN1, AXIN2, BLZF1 and CASC3. Ubiquitinated; autoubiquitinated. Autoubiquitination is enhanced upon poly(ADP-ribose)-binding.

It is found in the cytoplasm. The protein resides in the cytosol. The enzyme catalyses S-ubiquitinyl-[E2 ubiquitin-conjugating enzyme]-L-cysteine + [acceptor protein]-L-lysine = [E2 ubiquitin-conjugating enzyme]-L-cysteine + N(6)-ubiquitinyl-[acceptor protein]-L-lysine.. The protein operates within protein modification; protein ubiquitination. Its function is as follows. E3 ubiquitin-protein ligase that specifically binds poly-ADP-ribosylated proteins and mediates their ubiquitination and subsequent degradation. Acts as an activator of the Wnt signaling pathway by mediating the ubiquitination of poly-ADP-ribosylated AXIN1 and AXIN2, 2 key components of the beta-catenin destruction complex. Acts in cooperation with tankyrase proteins (TNKS and TNKS2), which mediate poly-ADP-ribosylation of target proteins AXIN1, AXIN2, BLZF1, CASC3, TNKS and TNKS2. Recognizes and binds tankyrase-dependent poly-ADP-ribosylated proteins via its WWE domain and mediates their ubiquitination. The protein is E3 ubiquitin-protein ligase RNF146-A (RNF146A) of Bos taurus (Bovine).